Consider the following 585-residue polypeptide: Proline-rich protein 14 (585 aa).

Position 1 is an N-acetylmethionine (Met1). The segment at 1 to 135 is sufficient for heterochromatin association in interphase and chromatin association in anaphase; it reads MDLPGDSSPP…TLRRRSRTTP (135 aa). Disordered regions lie at residues 23-46, 73-150, and 189-241; these read ALWG…PLEK, TSIP…RAPQ, and IVRQ…RPRL. The segment at 85–378 is required for the interaction with GRB2 and sufficient to promote the phosphorylation of AKT and cell proliferation; it reads PVHRQPPASP…MARAPPPPRP (294 aa). A compositionally biased stretch (basic residues) spans 119-132; it reads RIHRTSSTLRRRSR. The tract at residues 136 to 365 is required for nuclear lamina association; that stretch reads GPEEGPSQKV…RPRPRRHTVG (230 aa). Residues 193-205 are compositionally biased toward pro residues; sequence PTPPPGDLEPPFQ. Ser277 is subject to Phosphoserine. Disordered regions lie at residues 290–445 and 525–557; these read EAEQ…KVSR and DSSL…PDVG. Positions 337–356 are enriched in pro residues; the sequence is LGPPGPGTCTWPPAPPQPSR. Residues 393–409 are compositionally biased toward low complexity; the sequence is SPSLTTSCSSTASTSFS. Positions 518–535 are required for nuclear localization; it reads RRAVEFRDSSLPRSRRPS.

As to quaternary structure, interacts (via proline-rich region) with GRB2 (via SH3 domain 2). Interacts (via N-terminus) with CBX5.

It localises to the chromosome. The protein localises to the nucleus. It is found in the nucleus lamina. Its subcellular location is the nucleoplasm. Functions in tethering peripheral heterochromatin to the nuclear lamina during interphase, possibly through the interaction with heterochromatin protein CBX5/HP1 alpha. Might play a role in reattaching heterochromatin to the nuclear lamina at mitotic exit. Promotes myoblast differentiation during skeletal myogenesis, possibly by stimulating transcription factor MyoD activity via binding to CBX5/HP1 alpha. Involved in the positive regulation of the PI3K-Akt-mTOR signaling pathway and in promoting cell proliferation, possibly via binding to GRB2. The sequence is that of Proline-rich protein 14 (PRR14) from Homo sapiens (Human).